Reading from the N-terminus, the 295-residue chain is 4-hydroxy-tetrahydrodipicolinate synthase (295 aa).

Thr-48 serves as a coordination point for pyruvate. Tyr-135 functions as the Proton donor/acceptor in the catalytic mechanism. Catalysis depends on Lys-163, which acts as the Schiff-base intermediate with substrate. Val-204 is a binding site for pyruvate.

This sequence belongs to the DapA family. Homotetramer; dimer of dimers.

The protein resides in the cytoplasm. The enzyme catalyses L-aspartate 4-semialdehyde + pyruvate = (2S,4S)-4-hydroxy-2,3,4,5-tetrahydrodipicolinate + H2O + H(+). The protein operates within amino-acid biosynthesis; L-lysine biosynthesis via DAP pathway; (S)-tetrahydrodipicolinate from L-aspartate: step 3/4. Its function is as follows. Catalyzes the condensation of (S)-aspartate-beta-semialdehyde [(S)-ASA] and pyruvate to 4-hydroxy-tetrahydrodipicolinate (HTPA). This is 4-hydroxy-tetrahydrodipicolinate synthase from Francisella philomiragia subsp. philomiragia (strain ATCC 25017 / CCUG 19701 / FSC 153 / O#319-036).